We begin with the raw amino-acid sequence, 51 residues long: Large ribosomal subunit protein eL39 (51 aa).

Positions 1-22 (MAAQKSFRIKQKMAKAKKQNRP) are disordered. Residues 7–20 (FRIKQKMAKAKKQN) are compositionally biased toward basic residues.

The protein belongs to the eukaryotic ribosomal protein eL39 family. Component of the large ribosomal subunit (LSU). Mature yeast ribosomes consist of a small (40S) and a large (60S) subunit. The 40S small subunit contains 1 molecule of ribosomal RNA (18S rRNA) and 33 different proteins (encoded by 57 genes). The large 60S subunit contains 3 rRNA molecules (25S, 5.8S and 5S rRNA) and 46 different proteins (encoded by 81 genes). eL39 interacts with YIH1.

Its subcellular location is the cytoplasm. Functionally, component of the ribosome, a large ribonucleoprotein complex responsible for the synthesis of proteins in the cell. The small ribosomal subunit (SSU) binds messenger RNAs (mRNAs) and translates the encoded message by selecting cognate aminoacyl-transfer RNA (tRNA) molecules. The large subunit (LSU) contains the ribosomal catalytic site termed the peptidyl transferase center (PTC), which catalyzes the formation of peptide bonds, thereby polymerizing the amino acids delivered by tRNAs into a polypeptide chain. The nascent polypeptides leave the ribosome through a tunnel in the LSU and interact with protein factors that function in enzymatic processing, targeting, and the membrane insertion of nascent chains at the exit of the ribosomal tunnel. In Saccharomyces cerevisiae (strain ATCC 204508 / S288c) (Baker's yeast), this protein is Large ribosomal subunit protein eL39.